A 93-amino-acid chain; its full sequence is Large ribosomal subunit protein uL23 (93 aa).

This sequence belongs to the universal ribosomal protein uL23 family. In terms of assembly, part of the 50S ribosomal subunit. Contacts protein L29, and trigger factor when it is bound to the ribosome.

One of the early assembly proteins it binds 23S rRNA. One of the proteins that surrounds the polypeptide exit tunnel on the outside of the ribosome. Forms the main docking site for trigger factor binding to the ribosome. The polypeptide is Large ribosomal subunit protein uL23 (Opitutus terrae (strain DSM 11246 / JCM 15787 / PB90-1)).